The primary structure comprises 251 residues: ATP synthase delta chain, chloroplastic (251 aa).

The N-terminal 64 residues, 1–64 (MASLQHTTAS…STGGALGARM (64 aa)), are a transit peptide targeting the chloroplast.

This sequence belongs to the ATPase delta chain family. As to quaternary structure, F-type ATPases have 2 components, CF(1) - the catalytic core - and CF(0) - the membrane proton channel. CF(1) has five subunits: alpha(3), beta(3), gamma(1), delta(1), epsilon(1). CF(0) has three main subunits: a, b and c.

Its subcellular location is the plastid. The protein resides in the chloroplast thylakoid membrane. Functionally, this protein seems to be part of the stalk that links CF(0) to CF(1). It either transmits conformational changes from CF(0) into CF(1) or is implicated in proton conduction. In Pisum sativum (Garden pea), this protein is ATP synthase delta chain, chloroplastic (ATPD).